Reading from the N-terminus, the 315-residue chain is Small ribosomal subunit protein mS45 (315 aa).

Residues 1–66 (MRNSVEFSQL…SKYVACNSRS (66 aa)) constitute a mitochondrion transit peptide.

This sequence belongs to the mitochondrion-specific ribosomal protein mS45 family. Component of the mitochondrial small ribosomal subunit (mt-SSU). Mature yeast 74S mitochondrial ribosomes consist of a small (37S) and a large (54S) subunit. The 37S small subunit contains a 15S ribosomal RNA (15S mt-rRNA) and at least 32 different proteins. The 54S large subunit contains a 21S rRNA (21S mt-rRNA) and at least 45 different proteins.

It localises to the mitochondrion. Component of the mitochondrial ribosome (mitoribosome), a dedicated translation machinery responsible for the synthesis of mitochondrial genome-encoded proteins, including at least some of the essential transmembrane subunits of the mitochondrial respiratory chain. The mitoribosomes are attached to the mitochondrial inner membrane and translation products are cotranslationally integrated into the membrane. Required for mitochondrial protein synthesis. Has a role in mitochondrial integrity and cell respiration. The polypeptide is Small ribosomal subunit protein mS45 (bot1) (Schizosaccharomyces pombe (strain 972 / ATCC 24843) (Fission yeast)).